The chain runs to 2500 residues: Non-reducing polyketide synthase atr1 (2500 aa).

Positions V13–L260 are N-terminal acylcarrier protein transacylase domain (SAT). The Ketosynthase family 3 (KS3) domain occupies T385–Q808. Catalysis depends on for beta-ketoacyl synthase activity residues C557, H692, and H731. Residues M908 to D1199 form a malonyl-CoA:ACP transacylase (MAT) domain region. The active-site For acyl/malonyl transferase activity is the S995. The segment at P1286–Q1413 is N-terminal hotdog fold. The 299-residue stretch at P1286–E1584 folds into the PKS/mFAS DH domain. A product template (PT) domain region spans residues R1287 to L1583. The active-site Proton acceptor; for dehydratase activity is the H1317. Residues S1433 to E1584 are C-terminal hotdog fold. The Proton donor; for dehydratase activity role is filled by D1495. Residues A1594–N1649 form a disordered region. A compositionally biased stretch (low complexity) spans S1602–T1617. The region spanning N1649–K1725 is the Carrier domain. An O-(pantetheine 4'-phosphoryl)serine modification is found at S1683. Residues K2164–R2496 form a thioesterase (TE) domain region. Catalysis depends on for thioesterase activity residues S2285 and D2434.

The enzyme catalyses 6 malonyl-CoA + 2 acetyl-CoA + 2 S-adenosyl-L-methionine + 3 H(+) = 4-O-demethylbarbatate + 2 S-adenosyl-L-homocysteine + 6 CO2 + 8 CoA + H2O. It functions in the pathway secondary metabolite biosynthesis; terpenoid biosynthesis. In terms of biological role, non-reducing polyketide synthase; part of the gene cluster that mediates the biosynthesis of atranorin, a depside of polyketide origin that accumulates in the cortical or medullary layers of lichen thalli. The first step in the pathway is performed by the non-reducing polyketide synthase atr1 that produces 4-O-demethylbarbatic acid composed of two 3-methylorsellinic acid (3MOA) moieties from S-adenosyl-L-methionine (SAM), acetyl-CoA and malonyl-CoA units. The pathway continues with the actions of the cytochrome P450 monooygenase atr2 that catalizes the oxidation of c-9 and the O-methyltransferase atr3 that performs the methylation of the carboxyl group to yield atranorin, via the proatranorin II and III intermediates if atr2 acts first, or the proatranorin I intermediate if atr3 acts first. This chain is Non-reducing polyketide synthase atr1, found in Stereocaulon alpinum (Alpine snow lichen).